We begin with the raw amino-acid sequence, 393 residues long: Probable acetyl-CoA acyltransferase (393 aa).

Cys88 serves as the catalytic Acyl-thioester intermediate. Residues His349 and Cys378 each act as proton acceptor in the active site.

The protein belongs to the thiolase-like superfamily. Thiolase family.

The protein resides in the cytoplasm. The enzyme catalyses 2 acetyl-CoA = acetoacetyl-CoA + CoA. The chain is Probable acetyl-CoA acyltransferase from Staphylococcus aureus (strain MRSA252).